Consider the following 232-residue polypeptide: Orotidine 5'-phosphate decarboxylase (232 aa).

Residues Asp13, Lys35, 62 to 71 (DLKFHDIPNT), Thr122, Arg182, Gln191, Gly211, and Arg212 each bind substrate. Lys64 serves as the catalytic Proton donor.

This sequence belongs to the OMP decarboxylase family. Type 1 subfamily. In terms of assembly, homodimer.

It carries out the reaction orotidine 5'-phosphate + H(+) = UMP + CO2. It functions in the pathway pyrimidine metabolism; UMP biosynthesis via de novo pathway; UMP from orotate: step 2/2. Functionally, catalyzes the decarboxylation of orotidine 5'-monophosphate (OMP) to uridine 5'-monophosphate (UMP). The chain is Orotidine 5'-phosphate decarboxylase from Pseudomonas paraeruginosa (strain DSM 24068 / PA7) (Pseudomonas aeruginosa (strain PA7)).